A 617-amino-acid chain; its full sequence is D-glucuronyl C5-epimerase (617 aa).

Residues 1–11 lie on the Cytoplasmic side of the membrane; the sequence is MRCLAARVNYK. Residues 12 to 28 form a helical; Signal-anchor for type II membrane protein membrane-spanning segment; the sequence is TLIIICALFTLVTVLLW. Residues 29-617 lie on the Lumenal side of the membrane; sequence NKCSSDKAIQ…YLKGSRAKHN (589 aa). Substrate-binding positions include Tyr-179, 184–186, Gln-201, Tyr-209, Gln-212, and Gln-215; that span reads RDR. Residues Thr-237, Glu-239, Thr-268, Asn-269, and Asp-392 each coordinate Ca(2+). Substrate-binding positions include 429 to 432, 499 to 500, Asn-510, Tyr-514, Tyr-560, Arg-563, and 572 to 581; these read KLGE, EY, and NLARWDYHTT.

It belongs to the D-glucuronyl C5-epimerase family. In terms of assembly, homodimer. Interacts with HS2ST1.

It localises to the golgi apparatus membrane. The catalysed reaction is [heparosan-N-sulfate](n) = [heparan-N-sulfate](n). It functions in the pathway glycan metabolism; heparan sulfate biosynthesis. Its pathway is glycan metabolism; heparin biosynthesis. Functionally, converts D-glucuronic acid residues adjacent to N-sulfate sugar residues to L-iduronic acid residues, both in maturing heparan sulfate (HS) and heparin chains. This is important for further modifications that determine the specificity of interactions between these glycosaminoglycans and proteins. The chain is D-glucuronyl C5-epimerase (GLCE) from Bos taurus (Bovine).